Consider the following 582-residue polypeptide: Peptidyl-prolyl cis-trans isomerase FKBP10 (582 aa).

An N-terminal signal peptide occupies residues 1 to 26 (MFPAGPPSHSLLRLPLLQLLLLVVQA). PPIase FKBP-type domains are found at residues 62–150 (GDFV…LDVW), 174–262 (GDFV…IDVH), and 286–374 (GDFM…IDFH). N-linked (GlcNAc...) asparagine glycans are attached at residues asparagine 70, asparagine 182, asparagine 294, asparagine 310, asparagine 352, asparagine 393, and asparagine 407. The 88-residue stretch at 399 to 486 (GDFVRYHYNC…LFEVELVSRE (88 aa)) folds into the PPIase FKBP-type 4 domain. EF-hand domains are found at residues 497–532 (WHKD…QVSE) and 542–577 (DPEK…DEER). 10 residues coordinate Ca(2+): aspartate 510, asparagine 512, aspartate 514, glutamate 516, glutamate 521, aspartate 555, asparagine 557, aspartate 559, lysine 561, and glutamate 566. Positions 533 to 582 (GKGRLMPGQDPEKTIGDMFQNQDRNQDGKITVDELKLKSDEDEERVHEEL) are disordered. A compositionally biased stretch (basic and acidic residues) spans 556–582 (RNQDGKITVDELKLKSDEDEERVHEEL). The short motif at 579 to 582 (HEEL) is the Prevents secretion from ER element.

In terms of processing, glycosylated and phosphorylated.

It localises to the endoplasmic reticulum lumen. It carries out the reaction [protein]-peptidylproline (omega=180) = [protein]-peptidylproline (omega=0). Inhibited by both FK506 and rapamycin, but not by cyclosporin A. PPIases accelerate the folding of proteins during protein synthesis. In Homo sapiens (Human), this protein is Peptidyl-prolyl cis-trans isomerase FKBP10 (FKBP10).